The primary structure comprises 585 residues: Isocitrate dehydrogenase kinase/phosphatase (585 aa).

ATP is bound by residues 315 to 321 (APGVKGM) and Lys336. Asp371 is a catalytic residue.

It belongs to the AceK family.

It localises to the cytoplasm. It catalyses the reaction L-seryl-[isocitrate dehydrogenase] + ATP = O-phospho-L-seryl-[isocitrate dehydrogenase] + ADP + H(+). Functionally, bifunctional enzyme which can phosphorylate or dephosphorylate isocitrate dehydrogenase (IDH) on a specific serine residue. This is a regulatory mechanism which enables bacteria to bypass the Krebs cycle via the glyoxylate shunt in response to the source of carbon. When bacteria are grown on glucose, IDH is fully active and unphosphorylated, but when grown on acetate or ethanol, the activity of IDH declines drastically concomitant with its phosphorylation. This Photorhabdus laumondii subsp. laumondii (strain DSM 15139 / CIP 105565 / TT01) (Photorhabdus luminescens subsp. laumondii) protein is Isocitrate dehydrogenase kinase/phosphatase.